Consider the following 253-residue polypeptide: Triosephosphate isomerase (253 aa).

9-11 contributes to the substrate binding site; sequence NWK. Histidine 95 serves as the catalytic Electrophile. The Proton acceptor role is filled by glutamate 167. Substrate is bound by residues glycine 173, serine 213, and 234–235; that span reads GG. Serine 213 carries the post-translational modification Phosphoserine.

Belongs to the triosephosphate isomerase family. Homodimer.

Its subcellular location is the cytoplasm. The enzyme catalyses D-glyceraldehyde 3-phosphate = dihydroxyacetone phosphate. Its pathway is carbohydrate biosynthesis; gluconeogenesis. It participates in carbohydrate degradation; glycolysis; D-glyceraldehyde 3-phosphate from glycerone phosphate: step 1/1. Involved in the gluconeogenesis. Catalyzes stereospecifically the conversion of dihydroxyacetone phosphate (DHAP) to D-glyceraldehyde-3-phosphate (G3P). This Bacillus pumilus (strain SAFR-032) protein is Triosephosphate isomerase.